A 31-amino-acid polypeptide reads, in one-letter code: Cytochrome b6-f complex subunit 8 (31 aa).

The helical transmembrane segment at 5–25 (IVSLAWAALMVVFTFSLSLVV) threads the bilayer.

The protein belongs to the PetN family. In terms of assembly, the 4 large subunits of the cytochrome b6-f complex are cytochrome b6, subunit IV (17 kDa polypeptide, PetD), cytochrome f and the Rieske protein, while the 4 small subunits are PetG, PetL, PetM and PetN. The complex functions as a dimer.

The protein localises to the plastid. Its subcellular location is the chloroplast thylakoid membrane. Component of the cytochrome b6-f complex, which mediates electron transfer between photosystem II (PSII) and photosystem I (PSI), cyclic electron flow around PSI, and state transitions. This is Cytochrome b6-f complex subunit 8 from Cicer arietinum (Chickpea).